Reading from the N-terminus, the 177-residue chain is Acireductone dioxygenase (177 aa).

Residues histidine 97, histidine 99, glutamate 103, and histidine 141 each contribute to the Fe(2+) site. Ni(2+) is bound by residues histidine 97, histidine 99, glutamate 103, and histidine 141.

The protein belongs to the acireductone dioxygenase (ARD) family. In terms of assembly, monomer. The cofactor is Fe(2+). Ni(2+) serves as cofactor.

It carries out the reaction 1,2-dihydroxy-5-(methylsulfanyl)pent-1-en-3-one + O2 = 3-(methylsulfanyl)propanoate + CO + formate + 2 H(+). The enzyme catalyses 1,2-dihydroxy-5-(methylsulfanyl)pent-1-en-3-one + O2 = 4-methylsulfanyl-2-oxobutanoate + formate + 2 H(+). The protein operates within amino-acid biosynthesis; L-methionine biosynthesis via salvage pathway; L-methionine from S-methyl-5-thio-alpha-D-ribose 1-phosphate: step 5/6. In terms of biological role, catalyzes 2 different reactions between oxygen and the acireductone 1,2-dihydroxy-3-keto-5-methylthiopentene (DHK-MTPene) depending upon the metal bound in the active site. Fe-containing acireductone dioxygenase (Fe-ARD) produces formate and 2-keto-4-methylthiobutyrate (KMTB), the alpha-ketoacid precursor of methionine in the methionine recycle pathway. Ni-containing acireductone dioxygenase (Ni-ARD) produces methylthiopropionate, carbon monoxide and formate, and does not lie on the methionine recycle pathway. The protein is Acireductone dioxygenase of Leptospira biflexa serovar Patoc (strain Patoc 1 / ATCC 23582 / Paris).